Consider the following 370-residue polypeptide: Ni-sirohydrochlorin a,c-diamide reductive cyclase complex, component CfbD (370 aa).

Belongs to the NifD/NifK/NifE/NifN family. In terms of assembly, homodimer or monomer. The Ni-sirohydrochlorin a,c-diamide reductive cyclase complex is composed of a NifH homolog component CfbC and a NifD homolog component CfbD. [4Fe-4S] cluster is required as a cofactor.

The enzyme catalyses Ni-sirohydrochlorin a,c-diamide + 3 AH2 + ATP + H2O = 15,17(3)-seco-F430-17(3)-acid + 3 A + ADP + phosphate. Involved in the biosynthesis of the unique nickel-containing tetrapyrrole coenzyme F430, the prosthetic group of methyl-coenzyme M reductase (MCR), which plays a key role in methanogenesis and anaerobic methane oxidation. Catalyzes both the six-electron reduction of the tetrahydroporphyrin ring system and the gamma-lactamization of the c-acetamide side chain of Ni-sirohydrochlorin a,c-diamide to yield 15,17(3)-seco-F430-17(3)-acid (seco-F430), the last intermediate in the biosynthesis of the coenzyme F430. The sequence is that of Ni-sirohydrochlorin a,c-diamide reductive cyclase complex, component CfbD from Methanosarcina acetivorans (strain ATCC 35395 / DSM 2834 / JCM 12185 / C2A).